The chain runs to 185 residues: Auxin-responsive protein IAA34 (185 aa).

The EAR-like (transcriptional repression) motif lies at 63–67 (LGLSL). The PB1 domain occupies 92–180 (WGYVKVTMDG…ERLRITRRND (89 aa)).

This sequence belongs to the Aux/IAA family. In terms of assembly, homodimers and heterodimers.

Its subcellular location is the nucleus. In terms of biological role, aux/IAA proteins are short-lived transcriptional factors that function as repressors of early auxin response genes at low auxin concentrations. Repression is thought to result from the interaction with auxin response factors (ARFs), proteins that bind to the auxin-responsive promoter element (AuxRE). Formation of heterodimers with ARF proteins may alter their ability to modulate early auxin response genes expression. This chain is Auxin-responsive protein IAA34 (IAA34), found in Arabidopsis thaliana (Mouse-ear cress).